Reading from the N-terminus, the 401-residue chain is Exodeoxyribonuclease 7 large subunit (401 aa).

Belongs to the XseA family. Heterooligomer composed of large and small subunits.

The protein localises to the cytoplasm. It carries out the reaction Exonucleolytic cleavage in either 5'- to 3'- or 3'- to 5'-direction to yield nucleoside 5'-phosphates.. In terms of biological role, bidirectionally degrades single-stranded DNA into large acid-insoluble oligonucleotides, which are then degraded further into small acid-soluble oligonucleotides. The chain is Exodeoxyribonuclease 7 large subunit from Lachnoclostridium phytofermentans (strain ATCC 700394 / DSM 18823 / ISDg) (Clostridium phytofermentans).